The primary structure comprises 128 residues: Ribonuclease P protein component (128 aa).

It belongs to the RnpA family. In terms of assembly, consists of a catalytic RNA component (M1 or rnpB) and a protein subunit.

It carries out the reaction Endonucleolytic cleavage of RNA, removing 5'-extranucleotides from tRNA precursor.. In terms of biological role, RNaseP catalyzes the removal of the 5'-leader sequence from pre-tRNA to produce the mature 5'-terminus. It can also cleave other RNA substrates such as 4.5S RNA. The protein component plays an auxiliary but essential role in vivo by binding to the 5'-leader sequence and broadening the substrate specificity of the ribozyme. The chain is Ribonuclease P protein component from Parasynechococcus marenigrum (strain WH8102).